A 290-amino-acid polypeptide reads, in one-letter code: Membrane protein insertase YidC 1 (290 aa).

Residues 1–19 (MKKKALLPLFLGIMIFLAG) form the signal peptide. Residue Cys-20 is the site of N-palmitoyl cysteine attachment. Cys-20 carries S-diacylglycerol cysteine lipidation. 5 helical membrane passes run 56–76 (FGLA…PFML), 134–154 (MLGC…YFVL), 176–196 (PDIW…VVSS), 211–231 (MVIS…ALGL), and 232–252 (YWSV…IYYS). Residues 270 to 290 (HNPYSKKKGKNTQVVSKKNKK) are disordered. Residues 280 to 290 (NTQVVSKKNKK) show a composition bias toward polar residues.

The protein belongs to the OXA1/ALB3/YidC family. Type 2 subfamily.

It is found in the cell membrane. Required for the insertion and/or proper folding and/or complex formation of integral membrane proteins into the membrane. Involved in integration of membrane proteins that insert both dependently and independently of the Sec translocase complex, as well as at least some lipoproteins. The polypeptide is Membrane protein insertase YidC 1 (Staphylococcus epidermidis (strain ATCC 12228 / FDA PCI 1200)).